The following is a 533-amino-acid chain: Ribonuclease Y (533 aa).

The disordered stretch occupies residues 16–41 (VERIRRRAEQDAAEQTERVRREAEQI). The span at 22–41 (RAEQDAAEQTERVRREAEQI) shows a compositional bias: basic and acidic residues. The KH domain maps to 223-289 (VVSVLHLPSD…RITLTALVSD (67 aa)). The HD domain occupies 349–442 (VLAHLVESAH…TQAADQISGG (94 aa)).

Belongs to the RNase Y family.

Functionally, endoribonuclease that initiates mRNA decay. The polypeptide is Ribonuclease Y (Parafrankia sp. (strain EAN1pec)).